We begin with the raw amino-acid sequence, 238 residues long: Octanoyltransferase (238 aa).

In terms of domain architecture, BPL/LPL catalytic spans 44–224 (AGGPDSLLLL…AVLDALDGRI (181 aa)). Substrate is bound by residues 82–89 (RGGKITWH), 154–156 (AIG), and 167–169 (GFA). The active-site Acyl-thioester intermediate is the Cys185.

This sequence belongs to the LipB family.

The protein localises to the cytoplasm. The enzyme catalyses octanoyl-[ACP] + L-lysyl-[protein] = N(6)-octanoyl-L-lysyl-[protein] + holo-[ACP] + H(+). It functions in the pathway protein modification; protein lipoylation via endogenous pathway; protein N(6)-(lipoyl)lysine from octanoyl-[acyl-carrier-protein]: step 1/2. Its function is as follows. Catalyzes the transfer of endogenously produced octanoic acid from octanoyl-acyl-carrier-protein onto the lipoyl domains of lipoate-dependent enzymes. Lipoyl-ACP can also act as a substrate although octanoyl-ACP is likely to be the physiological substrate. In Mycolicibacterium gilvum (strain PYR-GCK) (Mycobacterium gilvum (strain PYR-GCK)), this protein is Octanoyltransferase.